A 527-amino-acid polypeptide reads, in one-letter code: Putative adhesin P1-like protein MPN_500 (527 aa).

Disordered regions lie at residues 1–26 (MDDI…GSRS), 76–148 (GWRN…LTNY), 248–269 (ASGS…PEQS), and 468–527 (FGTD…VSGH). Residues 9–26 (TSAGSSSGTSTNTSGSRS) show a composition bias toward low complexity. The segment covering 82–95 (TTSGSTGNANDTKF) has biased composition (polar residues). The segment covering 108–117 (SSGTNTSAGN) has biased composition (low complexity). Residues 128 to 148 (QNGQVKTSVQEATSGDNLTNY) are compositionally biased toward polar residues. Positions 248–262 (ASGSGSNTTSSPGIG) are enriched in low complexity. Residues 468 to 495 (FGTDHSTQPQPQSLKTTTPVFGRSSGNL) are compositionally biased toward polar residues. Residues 500–513 (SGGGAGGGSSGSGQ) are compositionally biased toward gly residues.

This sequence belongs to the adhesin P1 family.

In Mycoplasma pneumoniae (strain ATCC 29342 / M129 / Subtype 1) (Mycoplasmoides pneumoniae), this protein is Putative adhesin P1-like protein MPN_500.